The chain runs to 1052 residues: Calmin (1052 aa).

Residues 1–288 (MAAQEWDWFQ…IVTYVAQFLE (288 aa)) are actin-binding. The region spanning 32–139 (NVQKRTFTRW…LIWNIILFFQ (108 aa)) is the Calponin-homology (CH) 1 domain. The segment covering 148–168 (SRSSPSSSLSPGSGGTDSDSS) has biased composition (low complexity). The segment at 148–178 (SRSSPSSSLSPGSGGTDSDSSYPPTPTTERS) is disordered. The Calponin-homology (CH) 2 domain occupies 187–291 (RKAIKTLLSW…YVAQFLERFP (105 aa)). 4 disordered regions span residues 391–420 (STGK…SNSL), 455–545 (KATK…TLLA), 585–727 (STSQ…SPPL), and 758–929 (GEDL…DSSI). Basic and acidic residues-rich tracts occupy residues 455–465 (KATKELSKQDG) and 472–495 (VSKE…DKVP). A compositionally biased stretch (polar residues) spans 509-529 (AQPSQDSSFCNGTVESPSSQG). Ser537 is modified (phosphoserine). 3 stretches are compositionally biased toward basic and acidic residues: residues 594-614 (PSSH…AEKP), 622-651 (PRAE…EDQG), and 659-669 (PADKKPKVYEK). Ser679 carries the post-translational modification Phosphoserine. Thr710 carries the phosphothreonine modification. Residues 711–720 (LRSHSEEGLD) are compositionally biased toward basic and acidic residues. At Ser724 the chain carries Phosphoserine. A compositionally biased stretch (basic and acidic residues) spans 759–773 (EDLKSEDTDLEHPED). A compositionally biased stretch (acidic residues) spans 780-791 (REEEADEDEEEA). A compositionally biased stretch (low complexity) spans 792-801 (QSSQSSCSFS). Residues 836 to 849 (SHEDHQPKETKENG) are compositionally biased toward basic and acidic residues. Ser856 carries the phosphoserine modification. Over residues 880-889 (SKKKEKRKHM) the composition is skewed to basic residues. Ser925 bears the Phosphoserine mark. The helical; Anchor for type IV membrane protein transmembrane segment at 1027-1047 (VIYFILFLWLLVYCLLLFPQL) threads the bilayer.

Expressed in testis. Expressed during testis maturation process and in maturing spermatids. In brain, it is expressed in neurons of the hippocampus, cerebral cortex, and thalamus, Purkinje cells, and also in the choroid plexus and ependymal cells. Expressed predominantly in dendrites and cell bodies of the neurons, but not in axons. The level of expression increases during the period of maturation of the mouse brain after birth.

The protein localises to the membrane. It is found in the cytoplasm. The sequence is that of Calmin (Clmn) from Mus musculus (Mouse).